The following is a 291-amino-acid chain: MSAIDDLPPLREVIRAHGLSAQKSLGQNFLLDLNLTARIARGSGPLEGATVVEVGPGPGGLTRALLALGARKVIAIERDHRCIAALNEIAAAYPGRLEIIEGDALKVDVRPHLDGAEARVVANLPYNVGTQLLVGWLSTDPWPPWFSSLTLMFQREVAERIVAGPDSKAYGRLAVLTGWRAQARILFDVAPSAFVPPPKVTSSVIHVVPRAEPVPCALRDLERVTEAAFGQRRKMLRQSLKSLGVDPLALLSETGIDETARAEEIDVAGFLALANAFGRARGGGTGDAAGA.

S-adenosyl-L-methionine contacts are provided by Asn28, Leu30, Gly55, Glu77, Asp103, and Asn123.

The protein belongs to the class I-like SAM-binding methyltransferase superfamily. rRNA adenine N(6)-methyltransferase family. RsmA subfamily.

It is found in the cytoplasm. The enzyme catalyses adenosine(1518)/adenosine(1519) in 16S rRNA + 4 S-adenosyl-L-methionine = N(6)-dimethyladenosine(1518)/N(6)-dimethyladenosine(1519) in 16S rRNA + 4 S-adenosyl-L-homocysteine + 4 H(+). In terms of biological role, specifically dimethylates two adjacent adenosines (A1518 and A1519) in the loop of a conserved hairpin near the 3'-end of 16S rRNA in the 30S particle. May play a critical role in biogenesis of 30S subunits. This Azorhizobium caulinodans (strain ATCC 43989 / DSM 5975 / JCM 20966 / LMG 6465 / NBRC 14845 / NCIMB 13405 / ORS 571) protein is Ribosomal RNA small subunit methyltransferase A.